The chain runs to 144 residues: Austinoid biosynthesis clusters protein S (144 aa).

It belongs to the trt14 isomerase family. As to quaternary structure, homodimer.

Its pathway is secondary metabolite biosynthesis; terpenoid biosynthesis. Its function is as follows. Part of the gene cluster B that mediates the biosynthesis of the fungal meroterpenoid acetoxydehydroaustin. The first step of the pathway is the synthesis of 3,5-dimethylorsellinic acid by the polyketide synthase ausA. 3,5-dimethylorsellinic acid is then prenylated by the polyprenyl transferase ausN. Further epoxidation by the FAD-dependent monooxygenase ausM and cyclization by the probable terpene cyclase ausL lead to the formation of protoaustinoid A. Protoaustinoid A is then oxidized to spiro-lactone preaustinoid A3 by the combined action of the FAD-binding monooxygenases ausB and ausC, and the dioxygenase ausE. Acid-catalyzed keto-rearrangement and ring contraction of the tetraketide portion of preaustinoid A3 by ausJ lead to the formation of preaustinoid A4. The aldo-keto reductase ausK, with the help of ausH, is involved in the next step by transforming preaustinoid A4 into isoaustinone which is in turn hydroxylated by the P450 monooxygenase ausI to form austinolide. The cytochrome P450 monooxygenase ausG then modifies austinolide to austinol. Austinol is further acetylated to austin by the O-acetyltransferase ausP, which spontaneously changes to dehydroaustin. The cytochrome P450 monooxygenase then converts dehydroaustin is into 7-dehydrodehydroaustin. The hydroxylation catalyzed by ausR permits the second O-acetyltransferase ausQ to add an additional acetyl group to the molecule, leading to the formation of acetoxydehydroaustin. Due to genetic rearrangements of the clusters and the subsequent loss of some enzymes, the end product of the Penicillium brasilianum austinoid biosynthesis clusters is acetoxydehydroaustin. AusS is necessary for austinoids production and may play a possible function as a regulator. The chain is Austinoid biosynthesis clusters protein S from Penicillium brasilianum.